The following is a 983-amino-acid chain: Next to BRCA1 gene 1 protein (983 aa).

The PB1 domain maps to 4-86 (QVTLNVTFKN…NQLQMQVHEG (83 aa)). The residue at position 117 (Ser-117) is a Phosphoserine. The segment at 126–149 (MKTTEEPTAEARSPVPCDTDKPQD) is disordered. The ZZ-type zinc finger occupies 214-266 (SWHIACSHCQKRIVGVRYQCSLCPSYNICEDCEAGPYSHDTNHILLKFRRPVV). Residues Cys-219, Cys-222, Cys-233, Cys-236, Cys-242, Cys-245, His-252, and His-256 each contribute to the Zn(2+) site. ATG8 family proteins-binding regions lie at residues 544–638 (ASER…PASV) and 745–756 (ASSEDYIIILPE). Thr-588 carries the post-translational modification Phosphothreonine. Ser-592 and Ser-598 each carry phosphoserine. The tract at residues 611–645 (EESEGAGLKASPDSTVLTKRKAETPASVEETEEDL) is disordered. The disordered stretch occupies residues 768–813 (MYSSALSQPGLERGAEGEPGIESGQEPAEARERLPERESQPKEQSI). The span at 795-808 (AEARERLPERESQP) shows a compositional bias: basic and acidic residues. Ser-855 is subject to Phosphoserine. A disordered region spans residues 867-894 (DHVRGEPRGSTGLANSRQKSCDHSRHHN). The 45-residue stretch at 930 to 974 (SEDQTAALMAHLFEMGFCDRQLNLRLLRKHNHNILQVVTELLQVN) folds into the UBA domain.

In terms of assembly, homooligomer and heterooligomer. Interacts with TRIM55. Interacts with titin/TTN. Interacts with RNF29, USP8, MAP1LC3A, MAP1LC3B, MAP1LC3C, GABARAP, GABARAPL1 and GABARAPL2. Binds to ubiquitin and ubiquitinated proteins. Interacts with SQSTM1. Interacts with TAX1BP1. Interacts with IRF3; this interaction mediates autophagic degradation of IRF3. Interacts with IL12A and IL12B. Post-translationally, phosphorylated by GSK3A; this phosphorylation inhibits NBR1 involvement in the formation of ubiquitinated protein aggregates.

It localises to the cytoplasm. Its subcellular location is the cytoplasmic vesicle. The protein localises to the autophagosome. It is found in the lysosome. The protein resides in the myofibril. It localises to the sarcomere. Its subcellular location is the m line. Its function is as follows. Ubiquitin-binding autophagy adapter that participates in different processes including host defense or intracellular homeostasis. Possesses a double function during the selective autophagy by acting as a shuttle bringing ubiquitinated proteins to autophagosomes and also by participating in the formation of protein aggregates. Plays a role in the regulation of the innate immune response by modulating type I interferon production and targeting ubiquitinated IRF3 for autophagic degradation. In response to oxidative stress, promotes an increase in SQSTM1 levels, phosphorylation, and body formation by preventing its autophagic degradation. In turn, activates the KEAP1-NRF2/NFE2L2 antioxidant pathway. Also plays non-autophagy role by mediating the shuttle of IL-12 to late endosome for subsequent secretion. In Rattus norvegicus (Rat), this protein is Next to BRCA1 gene 1 protein (Nbr1).